A 231-amino-acid chain; its full sequence is Uracil phosphoribosyltransferase (231 aa).

Residue 38 to 42 participates in GTP binding; the sequence is KGLVR. 5-phospho-alpha-D-ribose 1-diphosphate contacts are provided by residues arginine 87, arginine 112, and 140–148; that span reads DPMIATGST. Residues isoleucine 203 and 208–210 each bind uracil; that span reads GDA. Residue aspartate 209 coordinates 5-phospho-alpha-D-ribose 1-diphosphate.

The protein belongs to the UPRTase family. Mg(2+) is required as a cofactor.

The catalysed reaction is UMP + diphosphate = 5-phospho-alpha-D-ribose 1-diphosphate + uracil. It participates in pyrimidine metabolism; UMP biosynthesis via salvage pathway; UMP from uracil: step 1/1. With respect to regulation, allosterically activated by GTP. In terms of biological role, catalyzes the conversion of uracil and 5-phospho-alpha-D-ribose 1-diphosphate (PRPP) to UMP and diphosphate. The protein is Uracil phosphoribosyltransferase of Methanococcus maripaludis (strain C5 / ATCC BAA-1333).